Here is a 405-residue protein sequence, read N- to C-terminus: Envelope glycoprotein M (405 aa).

Residues 1-17 (MKSSKNDTFVYRTWFKT) are Intravirion-facing. Residues 18–38 (LVVYFVMFVMSAVVPITAMFP) traverse the membrane as a helical segment. Residues 39-76 (NLGYPCYFNALVDYGALNLTNYNLAHHLTPTLYLEPPE) lie on the Virion surface side of the membrane. Residues 77–97 (MFVYITLVFIADCVAFIYYAC) form a helical membrane-spanning segment. Topologically, residues 98 to 121 (GEVALIKARKKVSGLTDLSAWVSA) are intravirion. A helical transmembrane segment spans residues 122–142 (VGSPTVLFLAILKLWSIQVFI). Over 143–149 (QVLSYKH) the chain is Virion surface. A helical transmembrane segment spans residues 150–170 (VFLSAFVYFLHFLASVLHACA). At 171 to 192 (CVTRFSPVWVVKAQDNSIPQDT) the chain is on the intravirion side. The chain crosses the membrane as a helical span at residues 193 to 215 (FLWWVVFYLKPIVTNLYLGCLAL). Over 216–245 (ETLVFSLSVFLALGNSFYFMVGDMVLGAVN) the chain is Virion surface. The chain crosses the membrane as a helical span at residues 246–266 (LFLVLPIFWYILTEVWLASFL). Residue arginine 267 is a topological domain, intravirion. The helical transmembrane segment at 268–288 (HNFGFYCGMFIASIILILPLV) threads the bilayer. Residues 289–299 (RYEAVFVSAKL) are Virion surface-facing. The helical transmembrane segment at 300-320 (HTTVAINVAIIPILCSVAMLI) threads the bilayer. Topologically, residues 321–405 (RICRIFKSMR…TTDSEEEIFP (85 aa)) are intravirion. The disordered stretch occupies residues 346–405 (LESEPRPRPSRTPSPGRNRRRSSTSSSSSRSTRRQRPVSTQALISSVLPMTTDSEEEIFP). Residues 386–397 (QALISSVLPMTT) are compositionally biased toward polar residues.

The protein belongs to the herpesviridae glycoprotein M family. Interacts (via N-terminus) with gN (via N-terminus). The gM-gN heterodimer forms the gCII complex.

The protein resides in the virion membrane. It localises to the host Golgi apparatus. It is found in the host trans-Golgi network. Its subcellular location is the host endosome membrane. The protein localises to the host nucleus inner membrane. Its function is as follows. Envelope glycoprotein important for virion assembly and egress. Plays a role in the correct incorporation of gH-gL into virion membrane. Directs the glycoprotein N (gN) to the host trans-Golgi network. This is Envelope glycoprotein M from Homo sapiens (Human).